Reading from the N-terminus, the 474-residue chain is MKLFPLFADLQGRRVLVVGGGEIAARKVQLLLEASADVRVGAPALTPELALLAAQGRIHALQGEFRPDWLDDAWLVVAATDDRAVNAAVSQAAQARRIFSNVVDDAELSSFQVPSIVDRSPLVVAISSSGVAPVLARRLREKVESLFDHSLGALAALAARHRPRIRERRPDLKQRRKFYDWLLDGPVAALLRQQRPEEAERLLETALQAPQDDGAGSVVLVGAGPGDPGLLTLKALRALNEADVILYDRLVSPAVLALARRDADRVAVGKRPGEDHDATQARIHALLVEHARAGRRVVRLKGGDAFIFGRGGEELEYLRAHGVRYEVVPGITAALACAAYAGIPLTHRDHAQSVRLVTAHCREDEDTLDWAGLAREHQTLAFYMGVGQLETLSARLIAHGRSGATPFALIENGSRPEQRVVSGRLADLAAVARSHGVRAPALLIVGEVAGLARELHWFGAHLEGQRPAPAALAA.

Residues 1-203 are precorrin-2 dehydrogenase /sirohydrochlorin ferrochelatase; that stretch reads MKLFPLFADL…QRPEEAERLL (203 aa). NAD(+) is bound by residues 22–23 and 43–44; these read EI and PA. S128 is modified (phosphoserine). A uroporphyrinogen-III C-methyltransferase region spans residues 216-474; sequence GSVVLVGAGP…QRPAPAALAA (259 aa). P225 provides a ligand contact to S-adenosyl-L-methionine. Catalysis depends on D248, which acts as the Proton acceptor. K270 acts as the Proton donor in catalysis. S-adenosyl-L-methionine contacts are provided by residues 302–304, I307, 332–333, M384, and G413; these read GGD and TA.

In the N-terminal section; belongs to the precorrin-2 dehydrogenase / sirohydrochlorin ferrochelatase family. This sequence in the C-terminal section; belongs to the precorrin methyltransferase family.

The catalysed reaction is uroporphyrinogen III + 2 S-adenosyl-L-methionine = precorrin-2 + 2 S-adenosyl-L-homocysteine + H(+). It carries out the reaction precorrin-2 + NAD(+) = sirohydrochlorin + NADH + 2 H(+). The enzyme catalyses siroheme + 2 H(+) = sirohydrochlorin + Fe(2+). Its pathway is cofactor biosynthesis; adenosylcobalamin biosynthesis; precorrin-2 from uroporphyrinogen III: step 1/1. It participates in cofactor biosynthesis; adenosylcobalamin biosynthesis; sirohydrochlorin from precorrin-2: step 1/1. It functions in the pathway porphyrin-containing compound metabolism; siroheme biosynthesis; precorrin-2 from uroporphyrinogen III: step 1/1. The protein operates within porphyrin-containing compound metabolism; siroheme biosynthesis; siroheme from sirohydrochlorin: step 1/1. Its pathway is porphyrin-containing compound metabolism; siroheme biosynthesis; sirohydrochlorin from precorrin-2: step 1/1. Its function is as follows. Multifunctional enzyme that catalyzes the SAM-dependent methylations of uroporphyrinogen III at position C-2 and C-7 to form precorrin-2 via precorrin-1. Then it catalyzes the NAD-dependent ring dehydrogenation of precorrin-2 to yield sirohydrochlorin. Finally, it catalyzes the ferrochelation of sirohydrochlorin to yield siroheme. This chain is Siroheme synthase, found in Bordetella petrii (strain ATCC BAA-461 / DSM 12804 / CCUG 43448).